The primary structure comprises 1383 residues: Insulin receptor (1383 aa).

The first 26 residues, 1–26, serve as a signal peptide directing secretion; that stretch reads MGSGRGCETTAVPLLMAVAVAGGTAG. Extracellular segments lie at residues 27–759 and 764–957; these read HLYP…TRPS and SLEE…NIAK. A disulfide bridge connects residues Cys-34 and Cys-52. N-linked (GlcNAc...) asparagine glycosylation is found at Asn-42, Asn-51, Asn-104, and Asn-137. 9 disulfide bridges follow: Cys-152–Cys-181, Cys-185–Cys-208, Cys-195–Cys-214, Cys-218–Cys-227, Cys-222–Cys-233, Cys-234–Cys-242, Cys-238–Cys-251, Cys-254–Cys-263, and Cys-267–Cys-279. A glycan (N-linked (GlcNAc...) asparagine) is linked at Asn-241. Residue Asn-281 is glycosylated (N-linked (GlcNAc...) asparagine). Disulfide bonds link Cys-285–Cys-310, Cys-292–Cys-300, Cys-314–Cys-327, Cys-330–Cys-334, and Cys-338–Cys-359. Asn-321 carries N-linked (GlcNAc...) asparagine glycosylation. N-linked (GlcNAc...) asparagine glycosylation occurs at Asn-363. Ser-399 is modified (phosphoserine). Position 400 is a phosphotyrosine (Tyr-400). Phosphoserine is present on Ser-406. N-linked (GlcNAc...) asparagine glycans are attached at residues Asn-423 and Asn-444. An intrachain disulfide couples Cys-461 to Cys-494. 4 N-linked (GlcNAc...) asparagine glycosylation sites follow: Asn-540, Asn-634, Asn-652, and Asn-699. The 103-residue stretch at 625-727 folds into the Fibronectin type-III 1 domain; that stretch reads VPLDPISVSN…SQILKELEES (103 aa). Cys-675 and Cys-900 are oxidised to a cystine. Positions 687–709 are disordered; that stretch reads SPPFESDDSQKHNQSEYDDSASE. The tract at residues 734–742 is insulin-binding; the sequence is EDYLHNVVF. Residues 747–783 are disordered; the sequence is TSSGNGAEDTRPSRKRRSLEEVGNVTATTPTLPDFPN. Fibronectin type-III domains lie at 754–848 and 854–948; these read EDTR…TMPE and IVGP…VTDY. N-linked (GlcNAc...) asparagine glycosylation is found at Asn-770, Asn-783, Asn-921, and Asn-934. Residues 771 to 783 show a composition bias toward polar residues; that stretch reads VTATTPTLPDFPN. A helical membrane pass occupies residues 958–978; sequence IIIGPLIFVFLFSVVIGSIYL. Residues 979-1383 lie on the Cytoplasmic side of the membrane; it reads FLRKRQPDGP…VLTLPRSNPS (405 aa). Residues 997–1000 form an important for interaction with IRS1, SHC1 and STAT5B region; the sequence is NPEY. Phosphotyrosine; by autocatalysis is present on Tyr-1000. Positions 1024–1299 constitute a Protein kinase domain; the sequence is ITLLRELGQG…LLKDDLHPSF (276 aa). Ser-1034 and Lys-1058 together coordinate ATP. A Glycyl lysine isopeptide (Lys-Gly) (interchain with G-Cter in ubiquitin) cross-link involves residue Lys-1080. Cys-1084 bears the S-nitrosocysteine mark. 1105–1111 lines the ATP pocket; the sequence is ELMAHGD. Asp-1160 serves as the catalytic Proton donor/acceptor. Residues 1164 to 1165 and Asp-1178 contribute to the ATP site; that span reads RN. Phosphotyrosine; by autocatalysis is present on residues Tyr-1186, Tyr-1190, Tyr-1191, Tyr-1356, and Tyr-1362. The segment at 1361–1383 is disordered; that stretch reads PYTHMNGGKKNGRVLTLPRSNPS. A PIK3R1 binding region spans residues 1362-1365; that stretch reads YTHM.

The protein belongs to the protein kinase superfamily. Tyr protein kinase family. Insulin receptor subfamily. In terms of assembly, tetramer of 2 alpha and 2 beta chains linked by disulfide bonds. The alpha chains carry the insulin-binding regions, while the beta chains carry the kinase domain. Forms a hybrid receptor with IGF1R, the hybrid is a tetramer consisting of 1 alpha chain and 1 beta chain of INSR and 1 alpha chain and 1 beta chain of IGF1R. Interacts with SORBS1 but dissociates from it following insulin stimulation. Binds SH2B2. Activated form of INSR interacts (via Tyr-1000) with the PTB/PID domains of IRS1 and SHC1. The sequences surrounding the phosphorylated NPXY motif contribute differentially to either IRS1 or SHC1 recognition. Interacts (via tyrosines in the C-terminus) with IRS2 (via PTB domain and 591-786 AA); the 591-786 would be the primary anchor of IRS2 to INSR while the PTB domain would have a stabilizing action on the interaction with INSR. Interacts with the SH2 domains of the 85 kDa regulatory subunit of PI3K (PIK3R1) in vitro, when autophosphorylated on tyrosine residues. Interacts with SOCS7. Interacts (via the phosphorylated Tyr-1000), with SOCS3. Interacts (via the phosphorylated Tyr-1186, Tyr-1190, Tyr-1191) with SOCS1. Interacts with ARRB2. Interacts with GRB10; this interaction blocks the association between IRS1/IRS2 and INSR, significantly reduces insulin-stimulated tyrosine phosphorylation of IRS1 and IRS2 and thus decreases insulin signaling. Interacts with PDPK1. Interacts (via Tyr-1191) with GRB14 (via BPS domain); this interaction protects the tyrosines in the activation loop from dephosphorylation, but promotes dephosphorylation of Tyr-1000, this results in decreased interaction with, and phosphorylation of, IRS1. Interacts (via subunit alpha) with ENPP1 (via 485-599 AA); this interaction blocks autophosphorylation. Interacts with PTPRE; this interaction is dependent of Tyr-1186, Tyr-1190 and Tyr-1191 of the INSR. Interacts with STAT5B (via SH2 domain). Interacts with PTPRF. Interacts with GRB7. Interacts with CAV2 (tyrosine-phosphorylated form); the interaction is increased with 'Tyr-27'phosphorylation of CAV2. Interacts with ATIC; ATIC together with PRKAA2/AMPK2 and HACD3/PTPLAD1 is proposed to be part of a signaling netwok regulating INSR autophosphorylation and endocytosis. Interacts with the insulin receptor SORL1; this interaction strongly increases its surface exposure, hence strengthens insulin signal reception. Interacts (tyrosine phosphorylated) with CCDC88A/GIV (via SH2-like region); binding requires autophosphorylation of the Insr C-terminal region. Interacts with GNAI3; the interaction is probably mediated by CCDC88A/GIV. Interacts with LMBRD1. Interacts (in response to insulin stimulation) with NCK1; this interaction may recruit PTPN1 to mediate INSR dephosphorylation. Interacts with CD248; this interaction diminishes INSR autophosphorylation. After being transported from the endoplasmic reticulum to the Golgi apparatus, the single glycosylated precursor is further glycosylated and then cleaved, followed by its transport to the plasma membrane. Post-translationally, autophosphorylated on tyrosine residues in response to insulin. Phosphorylation of Tyr-1000 is required for binding to IRS1, SHC1 and STAT5B. May also be phosphorylated at Tyr-1186 and Tyr-1191 by mTORC2. Dephosphorylated by PTPRE at Tyr-1000, Tyr-1186, Tyr-1190 and Tyr-1191. Dephosphorylated by PTPRF and PTPN1. Dephosphorylated by PTPN2; down-regulates insulin-induced signaling. In terms of processing, S-nitrosylation at Cys-1084 by BLVRB inhibits the receptor tyrosine kinase, thereby inhibiting insulin signaling. Ubiquitinated by MARCHF1; leading to degradation thereby reducing surface INSR expression.

The protein resides in the cell membrane. Its subcellular location is the late endosome. It localises to the lysosome. It carries out the reaction L-tyrosyl-[protein] + ATP = O-phospho-L-tyrosyl-[protein] + ADP + H(+). Its activity is regulated as follows. Activated in response to insulin. Autophosphorylation activates the kinase activity. PTPN1, PTPRE and PTPRF dephosphorylate important tyrosine residues, thereby reducing INSR activity. Inhibited by ENPP1. GRB10 and GRB14 inhibit the catalytic activity of the INSR, they block access of substrates to the activated receptor. SOCS1 and SOCS3 act as negative regulators of INSR activity, they bind to the activated INRS and interfere with the phosphorylation of INSR substrates. Receptor tyrosine kinase which mediates the pleiotropic actions of insulin. Binding of insulin leads to phosphorylation of several intracellular substrates, including, insulin receptor substrates (IRS1, 2, 3, 4), SHC, GAB1, CBL and other signaling intermediates. Each of these phosphorylated proteins serve as docking proteins for other signaling proteins that contain Src-homology-2 domains (SH2 domain) that specifically recognize different phosphotyrosine residues, including the p85 regulatory subunit of PI3K and SHP2. Phosphorylation of IRSs proteins lead to the activation of two main signaling pathways: the PI3K-AKT/PKB pathway, which is responsible for most of the metabolic actions of insulin, and the Ras-MAPK pathway, which regulates expression of some genes and cooperates with the PI3K pathway to control cell growth and differentiation. Binding of the SH2 domains of PI3K to phosphotyrosines on IRS1 leads to the activation of PI3K and the generation of phosphatidylinositol-(3, 4, 5)-triphosphate (PIP3), a lipid second messenger, which activates several PIP3-dependent serine/threonine kinases, such as PDPK1 and subsequently AKT/PKB. The net effect of this pathway is to produce a translocation of the glucose transporter SLC2A4/GLUT4 from cytoplasmic vesicles to the cell membrane to facilitate glucose transport. Moreover, upon insulin stimulation, activated AKT/PKB is responsible for: anti-apoptotic effect of insulin by inducing phosphorylation of BAD; regulates the expression of gluconeogenic and lipogenic enzymes by controlling the activity of the winged helix or forkhead (FOX) class of transcription factors. Another pathway regulated by PI3K-AKT/PKB activation is mTORC1 signaling pathway which regulates cell growth and metabolism and integrates signals from insulin. AKT mediates insulin-stimulated protein synthesis by phosphorylating TSC2 thereby activating mTORC1 pathway. The Ras/RAF/MAP2K/MAPK pathway is mainly involved in mediating cell growth, survival and cellular differentiation of insulin. Phosphorylated IRS1 recruits GRB2/SOS complex, which triggers the activation of the Ras/RAF/MAP2K/MAPK pathway. In addition to binding insulin, the insulin receptor can bind insulin-like growth factors (IGFI and IGFII). When present in a hybrid receptor with IGF1R, binds IGF1. In adipocytes, inhibits lipolysis. This Rattus norvegicus (Rat) protein is Insulin receptor (Insr).